A 124-amino-acid chain; its full sequence is Putative outer membrane protein CT_569 (124 aa).

A signal peptide spans 1 to 31 (MKKTKKRKQSITLVEMMVVITLIGIIGGALA).

It localises to the cell outer membrane. This chain is Putative outer membrane protein CT_569, found in Chlamydia trachomatis serovar D (strain ATCC VR-885 / DSM 19411 / UW-3/Cx).